Reading from the N-terminus, the 235-residue chain is tRNA pseudouridine synthase B (235 aa).

Residue aspartate 45 is the Nucleophile of the active site.

The protein belongs to the pseudouridine synthase TruB family. Type 1 subfamily.

The enzyme catalyses uridine(55) in tRNA = pseudouridine(55) in tRNA. Its function is as follows. Responsible for synthesis of pseudouridine from uracil-55 in the psi GC loop of transfer RNAs. The sequence is that of tRNA pseudouridine synthase B from Chlamydia pneumoniae (Chlamydophila pneumoniae).